The primary structure comprises 372 residues: Glutamate 5-kinase (372 aa).

Lysine 14 contributes to the ATP binding site. Positions 54, 141, and 153 each coordinate substrate. 173–174 provides a ligand contact to ATP; it reads TD. The PUA domain maps to 280 to 358; sequence RGRVVIDGGA…SEIESVLGHL (79 aa).

It belongs to the glutamate 5-kinase family.

It localises to the cytoplasm. The catalysed reaction is L-glutamate + ATP = L-glutamyl 5-phosphate + ADP. It participates in amino-acid biosynthesis; L-proline biosynthesis; L-glutamate 5-semialdehyde from L-glutamate: step 1/2. Functionally, catalyzes the transfer of a phosphate group to glutamate to form L-glutamate 5-phosphate. In Cupriavidus taiwanensis (strain DSM 17343 / BCRC 17206 / CCUG 44338 / CIP 107171 / LMG 19424 / R1) (Ralstonia taiwanensis (strain LMG 19424)), this protein is Glutamate 5-kinase.